The sequence spans 257 residues: Imidazole glycerol phosphate synthase subunit HisF (257 aa).

Catalysis depends on residues Asp12 and Asp131.

This sequence belongs to the HisA/HisF family. In terms of assembly, heterodimer of HisH and HisF.

It is found in the cytoplasm. It catalyses the reaction 5-[(5-phospho-1-deoxy-D-ribulos-1-ylimino)methylamino]-1-(5-phospho-beta-D-ribosyl)imidazole-4-carboxamide + L-glutamine = D-erythro-1-(imidazol-4-yl)glycerol 3-phosphate + 5-amino-1-(5-phospho-beta-D-ribosyl)imidazole-4-carboxamide + L-glutamate + H(+). Its pathway is amino-acid biosynthesis; L-histidine biosynthesis; L-histidine from 5-phospho-alpha-D-ribose 1-diphosphate: step 5/9. Its function is as follows. IGPS catalyzes the conversion of PRFAR and glutamine to IGP, AICAR and glutamate. The HisF subunit catalyzes the cyclization activity that produces IGP and AICAR from PRFAR using the ammonia provided by the HisH subunit. This chain is Imidazole glycerol phosphate synthase subunit HisF, found in Rhodococcus jostii (strain RHA1).